Reading from the N-terminus, the 475-residue chain is Retrotransposon Gag-like protein 3 (475 aa).

2 stretches are compositionally biased toward basic and acidic residues: residues 51-66 (LLRK…KLPE) and 78-87 (KTPEFKEPQK). Disordered regions lie at residues 51–101 (LLRK…EPPA), 152–173 (EPKN…APEY), and 397–421 (DPNP…ENQP). The CCHC-type zinc finger occupies 443 to 462 (RLCLYCGYPGHFARDCPVKP).

Its subcellular location is the nucleus. Functionally, may function as a transcriptional regulator. Plays a role in postnatal myogenesis, may be involved in the regulation of satellite cells self-renewal. The polypeptide is Retrotransposon Gag-like protein 3 (Homo sapiens (Human)).